A 551-amino-acid chain; its full sequence is Palmdelphin (551 aa).

Residue methionine 1 is modified to N-acetylmethionine. Residues 2–106 (EEAELVKERL…LQISTNEEAI (105 aa)) are a coiled coil. Lysine 125 participates in a covalent cross-link: Glycyl lysine isopeptide (Lys-Gly) (interchain with G-Cter in SUMO2). Serine 135 is subject to Phosphoserine. Lysine 179 participates in a covalent cross-link: Glycyl lysine isopeptide (Lys-Gly) (interchain with G-Cter in SUMO1); alternate. Lysine 179 is covalently cross-linked (Glycyl lysine isopeptide (Lys-Gly) (interchain with G-Cter in SUMO2); alternate). Basic and acidic residues predominate over residues 247–259 (SERNSKSPTEYHD). Disordered regions lie at residues 247-393 (SERN…EDEE) and 450-529 (EEEE…IAGD). Threonine 271 carries the post-translational modification Phosphothreonine. Residues serine 321, serine 370, serine 384, and serine 385 each carry the phosphoserine modification. Over residues 484–495 (KRAEVNPHENTN) the composition is skewed to basic and acidic residues. Serine 498, serine 515, and serine 520 each carry phosphoserine.

The protein belongs to the paralemmin family. In terms of assembly, interacts with GLUL. Cell projection, dendrite. Cell projection, dendritic spine. In terms of processing, phosphorylated.

The protein localises to the cytoplasm. Its subcellular location is the cell projection. It localises to the dendrite. It is found in the dendritic spine. This Sus scrofa (Pig) protein is Palmdelphin (PALMD).